We begin with the raw amino-acid sequence, 543 residues long: CTP synthase (543 aa).

The amidoligase domain stretch occupies residues 1–265 (MTRYIFVTGG…DDYVVERFGL (265 aa)). Residue Ser-13 participates in CTP binding. Ser-13 provides a ligand contact to UTP. ATP is bound by residues 14-19 (SLGKGI) and Asp-71. Mg(2+) contacts are provided by Asp-71 and Glu-139. CTP-binding positions include 146–148 (DIE), 186–191 (KTKPTQ), and Lys-222. Residues 186 to 191 (KTKPTQ) and Lys-222 contribute to the UTP site. A Glutamine amidotransferase type-1 domain is found at 290 to 541 (NIAMVGKYME…VNAALEYKAK (252 aa)). Gly-351 serves as a coordination point for L-glutamine. The active-site Nucleophile; for glutamine hydrolysis is Cys-378. Residues 379–382 (LGMQ), Glu-402, and Arg-469 each bind L-glutamine. Residues His-514 and Glu-516 contribute to the active site.

This sequence belongs to the CTP synthase family. Homotetramer.

The catalysed reaction is UTP + L-glutamine + ATP + H2O = CTP + L-glutamate + ADP + phosphate + 2 H(+). It catalyses the reaction L-glutamine + H2O = L-glutamate + NH4(+). It carries out the reaction UTP + NH4(+) + ATP = CTP + ADP + phosphate + 2 H(+). The protein operates within pyrimidine metabolism; CTP biosynthesis via de novo pathway; CTP from UDP: step 2/2. Allosterically activated by GTP, when glutamine is the substrate; GTP has no effect on the reaction when ammonia is the substrate. The allosteric effector GTP functions by stabilizing the protein conformation that binds the tetrahedral intermediate(s) formed during glutamine hydrolysis. Inhibited by the product CTP, via allosteric rather than competitive inhibition. In terms of biological role, catalyzes the ATP-dependent amination of UTP to CTP with either L-glutamine or ammonia as the source of nitrogen. Regulates intracellular CTP levels through interactions with the four ribonucleotide triphosphates. The chain is CTP synthase from Stutzerimonas stutzeri (strain A1501) (Pseudomonas stutzeri).